Reading from the N-terminus, the 88-residue chain is Small ribosomal subunit protein bS18B (88 aa).

The protein belongs to the bacterial ribosomal protein bS18 family. Part of the 30S ribosomal subunit. Forms a tight heterodimer with protein bS6.

Functionally, binds as a heterodimer with protein bS6 to the central domain of the 16S rRNA, where it helps stabilize the platform of the 30S subunit. The sequence is that of Small ribosomal subunit protein bS18B (rpsR2) from Mycobacterium bovis (strain ATCC BAA-935 / AF2122/97).